Reading from the N-terminus, the 127-residue chain is Large ribosomal subunit protein uL18 (127 aa).

The protein belongs to the universal ribosomal protein uL18 family. As to quaternary structure, part of the 50S ribosomal subunit; part of the 5S rRNA/L5/L18/L25 subcomplex. Contacts the 5S and 23S rRNAs.

Functionally, this is one of the proteins that bind and probably mediate the attachment of the 5S RNA into the large ribosomal subunit, where it forms part of the central protuberance. In Streptomyces coelicolor (strain ATCC BAA-471 / A3(2) / M145), this protein is Large ribosomal subunit protein uL18.